The chain runs to 405 residues: Phosphoglycerate kinase (405 aa).

Substrate-binding positions include 24 to 26 (DFN), R40, 63 to 66 (HLGR), R122, and R162. Residues K212, E331, and 361 to 364 (GGDS) contribute to the ATP site.

It belongs to the phosphoglycerate kinase family. Monomer.

It localises to the cytoplasm. The catalysed reaction is (2R)-3-phosphoglycerate + ATP = (2R)-3-phospho-glyceroyl phosphate + ADP. It functions in the pathway carbohydrate degradation; glycolysis; pyruvate from D-glyceraldehyde 3-phosphate: step 2/5. This Corynebacterium glutamicum (strain ATCC 13032 / DSM 20300 / JCM 1318 / BCRC 11384 / CCUG 27702 / LMG 3730 / NBRC 12168 / NCIMB 10025 / NRRL B-2784 / 534) protein is Phosphoglycerate kinase (pgk).